We begin with the raw amino-acid sequence, 231 residues long: MEQKTAPTQYEVKVQYNNSILNYAIDHSDQLTDIQKELIQFTKENIERHIMLTQAEQCSFFKLLIQVLNAKKTIDIGVFTGLSSLTAALAMGDEGRVVACDVSTEYTQHALKFWAKAGVDHKINLKIQPASKTLQELIDQGEENTYDFVFIDADKTGYDTYYELSLKLIRKGGIIAIDNVLQHGRVADPNANVEPNLVAIRALNDKILADKRVTKSLLPIADGITLITKIN.

S-adenosyl-L-methionine contacts are provided by residues T53, D75, 77–78, S83, D101, A130, D152, D154, and Y161; that span reads GV. A divalent metal cation is bound at residue D152. 2 residues coordinate a divalent metal cation: D178 and N179.

This sequence belongs to the class I-like SAM-binding methyltransferase superfamily. Cation-dependent O-methyltransferase family. CCoAMT subfamily.

It carries out the reaction (E)-caffeoyl-CoA + S-adenosyl-L-methionine = (E)-feruloyl-CoA + S-adenosyl-L-homocysteine + H(+). This Dictyostelium discoideum (Social amoeba) protein is Probable caffeoyl-CoA O-methyltransferase 2 (omt6).